The primary structure comprises 101 residues: Diptericin-D (101 aa).

The first 18 residues, 1-18, serve as a signal peptide directing secretion; the sequence is MKLFYLLVICALSLAVMA. O-linked (GalNAc...) threonine glycosylation is found at threonine 28 and threonine 72. Phenylalanine 100 is subject to Phenylalanine amide.

This sequence belongs to the attacin/sarcotoxin-2 family.

Functionally, has activity against E.coli. The sequence is that of Diptericin-D from Protophormia terraenovae (Northern blowfly).